A 308-amino-acid polypeptide reads, in one-letter code: S-crystallin SL18 (308 aa).

The region spanning 2–80 (PKYTLYYFNS…YLARQFGFYG (79 aa)) is the GST N-terminal domain. A disordered region spans residues 165–205 (EMRSQDSMVEPPSQKLSPELESQSSLCSERPQCGPPDPMMG). The span at 178–191 (QKLSPELESQSSLC) shows a compositional bias: polar residues. The 124-residue stretch at 185-308 (ESQSSLCSER…YFTLRNYTDF (124 aa)) folds into the GST C-terminal domain.

It belongs to the GST superfamily. In terms of tissue distribution, lens.

In terms of biological role, S-crystallins are structural components of squids and octopi eye lens. Contains relatively little if any GST activity. The chain is S-crystallin SL18 from Nototodarus sloanii (Wellington flying squid).